The chain runs to 436 residues: 5-hydroxytryptamine receptor 6 (436 aa).

At Met1 to Gly27 the chain is on the extracellular side. N-linked (GlcNAc...) asparagine glycosylation is present at Asn9. The chain crosses the membrane as a helical span at residues Trp28–Cys52. At Thr53 to Asn62 the chain is on the cytoplasmic side. A helical transmembrane segment spans residues Phe63 to Leu88. Topologically, residues Tyr89–Arg96 are extracellular. The helical transmembrane segment at Gly97–Leu122 threads the bilayer. A disulfide bridge links Cys99 with Cys180. Asp106 contacts serotonin. Over Asp123–Arg142 the chain is Cytoplasmic. Residues Ala143 to His167 traverse the membrane as a helical segment. At Glu168–Ser185 the chain is on the extracellular side. The helical transmembrane segment at Leu186–Cys209 threads the bilayer. Over Arg210 to Ala266 the chain is Cytoplasmic. The chain crosses the membrane as a helical span at residues Ser267 to Val293. Asn288 serves as a coordination point for serotonin. At Cys294 to Pro299 the chain is on the extracellular side. Residues Gly300–Phe323 traverse the membrane as a helical segment. Residues Met324–Pro436 lie on the Cytoplasmic side of the membrane.

It belongs to the G-protein coupled receptor 1 family. Interacts with MTOR, RPTOR and NF1. Interacts with CDK5. In terms of tissue distribution, localized exclusively in the central nervous system, predominantly in the corpus striatum but also in various limbic and cortical regions.

The protein localises to the cell membrane. Functionally, G-protein coupled receptor for 5-hydroxytryptamine (serotonin), a biogenic hormone that functions as a neurotransmitter, a hormone and a mitogen. Also has a high affinity for tricyclic psychotropic drugs. Ligand binding causes a conformation change that triggers signaling via guanine nucleotide-binding proteins (G proteins) and modulates the activity of downstream effectors. HTR6 is coupled to G(s) G alpha proteins and mediates activation of adenylate cyclase activity. Controls pyramidal neurons migration during corticogenesis, through the regulation of CDK5 activity. Is an activator of mTOR signaling. The chain is 5-hydroxytryptamine receptor 6 (Htr6) from Rattus norvegicus (Rat).